A 642-amino-acid chain; its full sequence is Probable serine/threonine-protein kinase drkA (642 aa).

The N-terminal stretch at 1-23 (MKKLPFLIIIIYIFLILISISSS) is a signal peptide. Over 24–322 (IDYNYNNDID…KPTISLLKKY (299 aa)) the chain is Extracellular. Over residues 106–128 (SENSGSGSNSNSNSKNTDSSTGP) the composition is skewed to low complexity. Residues 106 to 136 (SENSGSGSNSNSNSKNTDSSTGPTPSPISIN) form a disordered region. N-linked (GlcNAc...) asparagine glycans are attached at residues Asn-136, Asn-140, Asn-158, Asn-244, and Asn-271. Residues 323 to 343 (LIIGFSIVGGLLIIGGCFLLI) form a helical membrane-spanning segment. Over 344 to 642 (RNRYRSSGYY…SDLQYVRQQL (299 aa)) the chain is Cytoplasmic. The region spanning 374–627 (IKIGVRIGKG…EQCLERLESI (254 aa)) is the Protein kinase domain. ATP-binding positions include 380-388 (IGKGNYGEV) and Lys-401. The Proton acceptor role is filled by Asp-497.

It belongs to the protein kinase superfamily. TKL Ser/Thr protein kinase family.

It localises to the membrane. The catalysed reaction is L-seryl-[protein] + ATP = O-phospho-L-seryl-[protein] + ADP + H(+). The enzyme catalyses L-threonyl-[protein] + ATP = O-phospho-L-threonyl-[protein] + ADP + H(+). This Dictyostelium discoideum (Social amoeba) protein is Probable serine/threonine-protein kinase drkA (drkA).